The following is a 160-amino-acid chain: SsrA-binding protein (160 aa).

Belongs to the SmpB family.

Its subcellular location is the cytoplasm. Its function is as follows. Required for rescue of stalled ribosomes mediated by trans-translation. Binds to transfer-messenger RNA (tmRNA), required for stable association of tmRNA with ribosomes. tmRNA and SmpB together mimic tRNA shape, replacing the anticodon stem-loop with SmpB. tmRNA is encoded by the ssrA gene; the 2 termini fold to resemble tRNA(Ala) and it encodes a 'tag peptide', a short internal open reading frame. During trans-translation Ala-aminoacylated tmRNA acts like a tRNA, entering the A-site of stalled ribosomes, displacing the stalled mRNA. The ribosome then switches to translate the ORF on the tmRNA; the nascent peptide is terminated with the 'tag peptide' encoded by the tmRNA and targeted for degradation. The ribosome is freed to recommence translation, which seems to be the essential function of trans-translation. The sequence is that of SsrA-binding protein from Shewanella amazonensis (strain ATCC BAA-1098 / SB2B).